A 705-amino-acid polypeptide reads, in one-letter code: Rab guanine nucleotide exchange factor sec2 (705 aa).

Residues 144–285 (QTTLDDNLVA…KSVMQGMNIA (142 aa)) adopt a coiled-coil conformation.

Belongs to the SEC2 family.

In terms of biological role, guanine nucleotide exchange factor that plays an important role in regulating the growth and virulence, probably by regulating the autophagy pathway. Affects the sensitivity to cell wall disruptors and the cell wall thickness by regulating the expression levels of the cell wall integrity (CWI) pathway genes, thus coordinating the growth and virulence. Positively regulates the autophagy pathway to enhance the expression of CWI pathway genes in the presence of autophagy inducers. The protein is Rab guanine nucleotide exchange factor sec2 of Aspergillus fumigatus (strain ATCC MYA-4609 / CBS 101355 / FGSC A1100 / Af293) (Neosartorya fumigata).